The following is a 370-amino-acid chain: Queuine tRNA-ribosyltransferase (370 aa).

The Proton acceptor role is filled by D89. Residues 89–93 (DSGGF), D143, Q185, and G212 each bind substrate. Positions 243-249 (GVGKPED) are RNA binding. Catalysis depends on D262, which acts as the Nucleophile. The RNA binding; important for wobble base 34 recognition stretch occupies residues 267–271 (TRNAR). Positions 300, 302, 305, and 331 each coordinate Zn(2+).

It belongs to the queuine tRNA-ribosyltransferase family. As to quaternary structure, homodimer. Within each dimer, one monomer is responsible for RNA recognition and catalysis, while the other monomer binds to the replacement base PreQ1. Zn(2+) serves as cofactor.

The enzyme catalyses 7-aminomethyl-7-carbaguanine + guanosine(34) in tRNA = 7-aminomethyl-7-carbaguanosine(34) in tRNA + guanine. It participates in tRNA modification; tRNA-queuosine biosynthesis. Its function is as follows. Catalyzes the base-exchange of a guanine (G) residue with the queuine precursor 7-aminomethyl-7-deazaguanine (PreQ1) at position 34 (anticodon wobble position) in tRNAs with GU(N) anticodons (tRNA-Asp, -Asn, -His and -Tyr). Catalysis occurs through a double-displacement mechanism. The nucleophile active site attacks the C1' of nucleotide 34 to detach the guanine base from the RNA, forming a covalent enzyme-RNA intermediate. The proton acceptor active site deprotonates the incoming PreQ1, allowing a nucleophilic attack on the C1' of the ribose to form the product. After dissociation, two additional enzymatic reactions on the tRNA convert PreQ1 to queuine (Q), resulting in the hypermodified nucleoside queuosine (7-(((4,5-cis-dihydroxy-2-cyclopenten-1-yl)amino)methyl)-7-deazaguanosine). This chain is Queuine tRNA-ribosyltransferase, found in Hydrogenovibrio crunogenus (strain DSM 25203 / XCL-2) (Thiomicrospira crunogena).